Here is a 322-residue protein sequence, read N- to C-terminus: Acetyl-coenzyme A carboxylase carboxyl transferase subunit alpha (322 aa).

A CoA carboxyltransferase C-terminal domain is found at 40-297 (PLQKKLGDLR…RETLTRNLEE (258 aa)).

Belongs to the AccA family. Acetyl-CoA carboxylase is a heterohexamer composed of biotin carboxyl carrier protein (AccB), biotin carboxylase (AccC) and two subunits each of ACCase subunit alpha (AccA) and ACCase subunit beta (AccD).

The protein localises to the cytoplasm. The catalysed reaction is N(6)-carboxybiotinyl-L-lysyl-[protein] + acetyl-CoA = N(6)-biotinyl-L-lysyl-[protein] + malonyl-CoA. It participates in lipid metabolism; malonyl-CoA biosynthesis; malonyl-CoA from acetyl-CoA: step 1/1. Functionally, component of the acetyl coenzyme A carboxylase (ACC) complex. First, biotin carboxylase catalyzes the carboxylation of biotin on its carrier protein (BCCP) and then the CO(2) group is transferred by the carboxyltransferase to acetyl-CoA to form malonyl-CoA. The sequence is that of Acetyl-coenzyme A carboxylase carboxyl transferase subunit alpha from Gemmatimonas aurantiaca (strain DSM 14586 / JCM 11422 / NBRC 100505 / T-27).